The primary structure comprises 359 residues: Hsp70-binding protein 1 (359 aa).

The tract at residues 1–71 is disordered; it reads MSDEGSRGSR…PPPEPMSEER (71 aa). Positions 23-37 are enriched in gly residues; that stretch reads SSGGGGGGSSAGGSG. ARM repeat units follow at residues 132 to 174, 177 to 217, 220 to 259, and 262 to 301; these read ENMD…TCSQ, AAIQ…CLVR, EAGL…NLLV, and PEHK…SLVT. Residues serine 351 and serine 356 each carry the phosphoserine modification.

In terms of assembly, interacts with the ATP-binding domain of HSPA1A. Detected in a ternary complex containing STUB1, HSPA1A and HSPBP1. Interacts with PGLYRP1; this interaction blocks the cytotoxic activity of the PGLYRP1-HSPA1A complex. Ubiquitous.

Functionally, inhibits HSPA1A chaperone activity by changing the conformation of the ATP-binding domain of HSPA1A and interfering with ATP binding. Interferes with ubiquitination mediated by STUB1 and inhibits chaperone-assisted degradation of immature CFTR. In Homo sapiens (Human), this protein is Hsp70-binding protein 1.